A 202-amino-acid chain; its full sequence is Snake venom metalloproteinase atroxlysin-1 (202 aa).

Positions 6–202 (RYVDLFIVVD…ENPQCILNKR (197 aa)) constitute a Peptidase M12B domain. Ca(2+) contacts are provided by D9 and D93. 3 disulfides stabilise this stretch: C117-C197, C157-C181, and C159-C164. H142 provides a ligand contact to Zn(2+). E143 is an active-site residue. Residues H146 and H152 each contribute to the Zn(2+) site. The Ca(2+) site is built by C197 and N200.

Belongs to the venom metalloproteinase (M12B) family. P-I subfamily. Monomer. The cofactor is Zn(2+). In terms of tissue distribution, expressed by the venom gland.

The protein localises to the secreted. With respect to regulation, inhibited by EDTA, DTT and high concentrations of zinc ions (&gt;2 mM). Weakly inhibited by TLCK. Not inhibited by PMSF. Activated by calcium ions. Functionally, snake venom zinc metalloproteinase that acts on fibrinogen, fibrin, fibronectin (FN1), type I collagen, type IV collagen, integrin alpha-7/beta-1 (ITGA7/ITGB1) and integrin alpha-1/beta-1 (ITGA1/ITGB1). Binds to fibronectin (FN1), fibrinogen and, weakly, to type I collagen and laminin. Cleaves Xaa-Leu bonds. Inhibits ADP- and collagen-induced platelet aggregation both in the presence (IC(50)=1.4 uM for collagen) and in the absence (IC(50)=2.2 uM for collagen) of cofactors. Has hemorrhagic activity. This Bothrops atrox (Barba amarilla) protein is Snake venom metalloproteinase atroxlysin-1.